We begin with the raw amino-acid sequence, 619 residues long: 4-hydroxyphenylalkanoate adenylyltransferase (619 aa).

It belongs to the ATP-dependent AMP-binding enzyme family.

The enzyme catalyses 17-(4-hydroxyphenyl)heptadecanoate + holo-[(phenol)carboxyphthiodiolenone synthase] + ATP = 17-(4-hydroxyphenyl)heptadecanoyl-[(phenol)carboxyphthiodiolenone synthase] + AMP + diphosphate. The catalysed reaction is 19-(4-hydroxyphenyl)nonadecanoate + holo-[(phenol)carboxyphthiodiolenone synthase] + ATP = 19-(4-hydroxyphenyl)nonadecanoyl-[(phenol)carboxyphthiodiolenone synthase] + AMP + diphosphate. It functions in the pathway lipid metabolism; fatty acid biosynthesis. In terms of biological role, catalyzes the activation of long-chain fatty acids as acyl-adenylates (acyl-AMP), which are then transferred to the multifunctional polyketide synthase PpsA for further chain extension. Involved in the biosynthesis of phenolphthiocerol, which is an important intermediate in the biosynthesis of phenolic glycolipid (PGL), also called mycosid B. In Mycobacterium bovis (strain ATCC BAA-935 / AF2122/97), this protein is 4-hydroxyphenylalkanoate adenylyltransferase (fadD29).